The sequence spans 295 residues: MTQRKGIILAGGSGTRLYPITKGVSKQLLPVYDKPMIYYPLSVLMLAGIRDILIINTPHEQALFQSLLGDGAQWGVNIQYAVQPSPDGLAQAYLIGRDFVGGKPSCLVLGDNIFHGHGLTDTLRRADAREQGATVFGYWVNDPERYGVAEFDQHGKVIDIAEKPEKPRSNYAVTGLYFYDGKASDYAAALKPSPRGELEITDLNRCYLDAGDLHLEPLGRGYAWLDTGTHQSLHEAANFIETIQMRQGLQVCCPEEIAFGQGWIDAEQLERLAAPLLKNDYGKYLTALAKRGAVH.

Mg(2+) contacts are provided by D111 and D226.

This sequence belongs to the glucose-1-phosphate thymidylyltransferase family. As to quaternary structure, homotetramer. Mg(2+) is required as a cofactor.

The catalysed reaction is dTTP + alpha-D-glucose 1-phosphate + H(+) = dTDP-alpha-D-glucose + diphosphate. It functions in the pathway carbohydrate biosynthesis; dTDP-L-rhamnose biosynthesis. It participates in bacterial outer membrane biogenesis; LPS O-antigen biosynthesis. In terms of biological role, catalyzes the formation of dTDP-glucose, from dTTP and glucose 1-phosphate, as well as its pyrophosphorolysis. This is Glucose-1-phosphate thymidylyltransferase (rmlA) from Xanthomonas campestris pv. campestris (strain B100).